We begin with the raw amino-acid sequence, 178 residues long: ATP-dependent protease subunit HslV (178 aa).

Thr5 is an active-site residue. Residues Gly161, Cys164, and Thr167 each contribute to the Na(+) site.

This sequence belongs to the peptidase T1B family. HslV subfamily. A double ring-shaped homohexamer of HslV is capped on each side by a ring-shaped HslU homohexamer. The assembly of the HslU/HslV complex is dependent on binding of ATP.

The protein resides in the cytoplasm. The enzyme catalyses ATP-dependent cleavage of peptide bonds with broad specificity.. Allosterically activated by HslU binding. In terms of biological role, protease subunit of a proteasome-like degradation complex believed to be a general protein degrading machinery. The sequence is that of ATP-dependent protease subunit HslV from Nitratiruptor sp. (strain SB155-2).